A 109-amino-acid polypeptide reads, in one-letter code: Nucleoid-associated protein swp_1717 (109 aa).

Residues 88-109 (QKDKMAEVTGGMQLPPGMKMPF) are disordered.

This sequence belongs to the YbaB/EbfC family. In terms of assembly, homodimer.

Its subcellular location is the cytoplasm. The protein resides in the nucleoid. Its function is as follows. Binds to DNA and alters its conformation. May be involved in regulation of gene expression, nucleoid organization and DNA protection. The protein is Nucleoid-associated protein swp_1717 of Shewanella piezotolerans (strain WP3 / JCM 13877).